A 206-amino-acid polypeptide reads, in one-letter code: ATP-dependent Clp protease proteolytic subunit (206 aa).

Ser-108 (nucleophile) is an active-site residue. The active site involves His-133.

It belongs to the peptidase S14 family. As to quaternary structure, fourteen ClpP subunits assemble into 2 heptameric rings which stack back to back to give a disk-like structure with a central cavity, resembling the structure of eukaryotic proteasomes.

The protein localises to the cytoplasm. It carries out the reaction Hydrolysis of proteins to small peptides in the presence of ATP and magnesium. alpha-casein is the usual test substrate. In the absence of ATP, only oligopeptides shorter than five residues are hydrolyzed (such as succinyl-Leu-Tyr-|-NHMec, and Leu-Tyr-Leu-|-Tyr-Trp, in which cleavage of the -Tyr-|-Leu- and -Tyr-|-Trp bonds also occurs).. Its function is as follows. Cleaves peptides in various proteins in a process that requires ATP hydrolysis. Has a chymotrypsin-like activity. Plays a major role in the degradation of misfolded proteins. This Chromohalobacter salexigens (strain ATCC BAA-138 / DSM 3043 / CIP 106854 / NCIMB 13768 / 1H11) protein is ATP-dependent Clp protease proteolytic subunit.